Here is a 451-residue protein sequence, read N- to C-terminus: Trigger factor (451 aa).

Positions 163 to 248 constitute a PPIase FKBP-type domain; it reads GDIIDMEYTV…IKALYVNILP (86 aa).

Belongs to the FKBP-type PPIase family. Tig subfamily.

The protein localises to the cytoplasm. The catalysed reaction is [protein]-peptidylproline (omega=180) = [protein]-peptidylproline (omega=0). Its function is as follows. Involved in protein export. Acts as a chaperone by maintaining the newly synthesized protein in an open conformation. Functions as a peptidyl-prolyl cis-trans isomerase. This Leptospira borgpetersenii serovar Hardjo-bovis (strain JB197) protein is Trigger factor.